Consider the following 692-residue polypeptide: Elongation factor G (692 aa).

The region spanning E8–L282 is the tr-type G domain. GTP contacts are provided by residues A17–T24, D81–H85, and N135–D138.

The protein belongs to the TRAFAC class translation factor GTPase superfamily. Classic translation factor GTPase family. EF-G/EF-2 subfamily.

The protein localises to the cytoplasm. Its function is as follows. Catalyzes the GTP-dependent ribosomal translocation step during translation elongation. During this step, the ribosome changes from the pre-translocational (PRE) to the post-translocational (POST) state as the newly formed A-site-bound peptidyl-tRNA and P-site-bound deacylated tRNA move to the P and E sites, respectively. Catalyzes the coordinated movement of the two tRNA molecules, the mRNA and conformational changes in the ribosome. The chain is Elongation factor G from Geobacillus thermodenitrificans (strain NG80-2).